Consider the following 54-residue polypeptide: Ovomucoid (54 aa).

One can recognise a Kazal-like domain in the interval 4-54; the sequence is VDCSDYPKPVCSLEYMPLCGSDNKTYGNKCNFCNAVADSNGTLTLSHFGKC. 3 cysteine pairs are disulfide-bonded: Cys-6/Cys-36, Cys-14/Cys-33, and Cys-22/Cys-54. N-linked (GlcNAc...) asparagine glycosylation occurs at Asn-43.

The protein localises to the secreted. The sequence is that of Ovomucoid from Guira guira (Guira cuckoo).